A 52-amino-acid chain; its full sequence is Proteinase inhibitor PSI-1.2 (52 aa).

4 disulfides stabilise this stretch: Cys3–Cys32, Cys7–Cys28, Cys16–Cys38, and Cys31–Cys49.

Functionally, potent inhibitor of trypsin and a weaker inhibitor of chymotrypsin. It does not inhibit elastase and subtilisin DY. This Capsicum annuum (Capsicum pepper) protein is Proteinase inhibitor PSI-1.2.